The following is a 307-amino-acid chain: Histone deacetylase HDT1 (307 aa).

The segment covering 98–112 has biased composition (acidic residues); it reads EDEMDLDSEDEDEEL. The interval 98–280 is disordered; it reads EDEMDLDSED…KSGGSVPCKP (183 aa). Over residues 119-132 the composition is skewed to basic and acidic residues; it reads ENGKADEKKQKSQE. Residues 151 to 197 are compositionally biased toward acidic residues; it reads DDDSDEDETDDSDEDETDDSDEGLSSEEGDDDSSDEDDTSDDEEEDT. Residues 198-211 are compositionally biased toward basic and acidic residues; sequence PTPKKPEVGKKRPA. Low complexity predominate over residues 265–277; sequence SPKSAPKSGGSVP. A C2H2-type; degenerate zinc finger spans residues 276–299; sequence VPCKPCSKSFISETALQAHSRAKM.

This sequence belongs to the histone deacetylase HD2 family. As to quaternary structure, multimer. Isolated as a trimer composed of 3 proteins of 39, 42 and 45 kDa, possibly a homotrimer with different phosphorylation status or a heterotrimer with HDT2 and/or HDT3. The N-terminus is blocked. Post-translationally, phosphorylated. Required for enzyme activity.

The protein localises to the nucleus. It is found in the nucleolus. Its activity is regulated as follows. Inhibited by 3-(4-Aroyl-1-methyl-1H-pyrrol-2-yl)-N-hydroxy-2-propenamides. 3-(1-methyl-4-phenylacetyl-1H-pyrrol-2-yl)-N-hydroxy-2-propenamide 1b and 3-[1-methyl-4-(3-phenyl-2-propenoyl)-1H-pyrrol-2-yl]-N-hydroxy-2-propenamide 1c are very potent inhibitors. Its function is as follows. Mediates the deacetylation of lysine residues on the N-terminal part of the core histones (H2A, H2B, H3 and H4). Histone deacetylation gives a tag for epigenetic repression and plays an important role in transcriptional regulation, cell cycle progression and developmental events. Able to deacetylate all 4 core histones. This is Histone deacetylase HDT1 (HDT1) from Zea mays (Maize).